A 296-amino-acid chain; its full sequence is NmrA-like family domain-containing protein 1 (296 aa).

Residues Gly-11–Gln-16, Arg-37–Arg-41, Asp-58–Gln-59, Thr-79–Phe-81, Lys-133, and Tyr-155–Asn-158 each bind NADP(+).

It belongs to the NmrA-type oxidoreductase family. In terms of assembly, homodimer.

It localises to the cytoplasm. The protein localises to the perinuclear region. It is found in the nucleus. Its function is as follows. Redox sensor protein. Undergoes restructuring and subcellular redistribution in response to changes in intracellular NADPH/NADP(+) levels. This chain is NmrA-like family domain-containing protein 1 (NMRAL1), found in Gallus gallus (Chicken).